A 288-amino-acid polypeptide reads, in one-letter code: Damage-control phosphatase AF_1104 (288 aa).

A Subfamily I CxxC motif motif is present at residues 7-10 (CPSC). 3 residues coordinate Mn(2+): Asp-160, Asn-161, and Asp-194. The Subfamily I GNFE-like motif signature appears at 247 to 250 (ANYE). Residues 267–268 (KC) carry the Subfamily I KC motif motif.

This sequence belongs to the damage-control phosphatase family. Nucleotides phosphatase I subfamily. It depends on [2Fe-2S] cluster as a cofactor. The cofactor is Mn(2+). Ni(2+) is required as a cofactor.

Metal-dependent phosphatase with probable damage-control functions. Could hydrolyze oxidatively damaged purine nucleotides or their biosynthetic intermediates. In Archaeoglobus fulgidus (strain ATCC 49558 / DSM 4304 / JCM 9628 / NBRC 100126 / VC-16), this protein is Damage-control phosphatase AF_1104.